We begin with the raw amino-acid sequence, 504 residues long: Arabinose import ATP-binding protein AraG (504 aa).

ABC transporter domains lie at Leu8–Arg243 and Tyr256–Val499. Gly40–Ser47 provides a ligand contact to ATP.

The protein belongs to the ABC transporter superfamily. Arabinose importer (TC 3.A.1.2.2) family. In terms of assembly, the complex is composed of two ATP-binding proteins (AraG), two transmembrane proteins (AraH) and a solute-binding protein (AraF).

It is found in the cell inner membrane. It catalyses the reaction L-arabinose(out) + ATP + H2O = L-arabinose(in) + ADP + phosphate + H(+). Its function is as follows. Part of the ABC transporter complex AraFGH involved in arabinose import. Responsible for energy coupling to the transport system. The sequence is that of Arabinose import ATP-binding protein AraG from Shigella sonnei (strain Ss046).